The chain runs to 188 residues: UPF0314 protein Sala_3154 (188 aa).

3 helical membrane-spanning segments follow: residues 8–28, 57–77, and 143–163; these read TGWL…IFMG, WYSF…RWIM, and MRWW…LWTI.

The protein belongs to the UPF0314 family.

The protein localises to the cell membrane. The chain is UPF0314 protein Sala_3154 from Sphingopyxis alaskensis (strain DSM 13593 / LMG 18877 / RB2256) (Sphingomonas alaskensis).